We begin with the raw amino-acid sequence, 37 residues long: Large ribosomal subunit protein bL36c (37 aa).

Belongs to the bacterial ribosomal protein bL36 family.

It localises to the plastid. It is found in the chloroplast. The polypeptide is Large ribosomal subunit protein bL36c (Physcomitrium patens (Spreading-leaved earth moss)).